A 603-amino-acid chain; its full sequence is DNA mismatch repair protein MutL (603 aa).

It belongs to the DNA mismatch repair MutL/HexB family.

Its function is as follows. This protein is involved in the repair of mismatches in DNA. It is required for dam-dependent methyl-directed DNA mismatch repair. May act as a 'molecular matchmaker', a protein that promotes the formation of a stable complex between two or more DNA-binding proteins in an ATP-dependent manner without itself being part of a final effector complex. The protein is DNA mismatch repair protein MutL of Nitrobacter hamburgensis (strain DSM 10229 / NCIMB 13809 / X14).